Reading from the N-terminus, the 777-residue chain is Lon protease (777 aa).

Residues 11–204 (IPVLPLRDVV…FLMAIMESEI (194 aa)) form the Lon N-terminal domain. 356-363 (GPPGVGKT) is an ATP binding site. Residues 592-773 (TNQIGQVIGL…EEVLKLSLEK (182 aa)) enclose the Lon proteolytic domain. Residues Ser679 and Lys722 contribute to the active site.

Belongs to the peptidase S16 family. In terms of assembly, homohexamer. Organized in a ring with a central cavity.

The protein localises to the cytoplasm. The enzyme catalyses Hydrolysis of proteins in presence of ATP.. ATP-dependent serine protease that mediates the selective degradation of mutant and abnormal proteins as well as certain short-lived regulatory proteins. Required for cellular homeostasis and for survival from DNA damage and developmental changes induced by stress. Degrades polypeptides processively to yield small peptide fragments that are 5 to 10 amino acids long. Binds to DNA in a double-stranded, site-specific manner. The sequence is that of Lon protease from Buchnera aphidicola subsp. Acyrthosiphon pisum (strain APS) (Acyrthosiphon pisum symbiotic bacterium).